A 117-amino-acid chain; its full sequence is Ribonuclease P protein component (117 aa).

This sequence belongs to the RnpA family. In terms of assembly, consists of a catalytic RNA component (M1 or rnpB) and a protein subunit.

The enzyme catalyses Endonucleolytic cleavage of RNA, removing 5'-extranucleotides from tRNA precursor.. In terms of biological role, RNaseP catalyzes the removal of the 5'-leader sequence from pre-tRNA to produce the mature 5'-terminus. It can also cleave other RNA substrates such as 4.5S RNA. The protein component plays an auxiliary but essential role in vivo by binding to the 5'-leader sequence and broadening the substrate specificity of the ribozyme. This Lactococcus lactis subsp. lactis (strain IL1403) (Streptococcus lactis) protein is Ribonuclease P protein component.